A 601-amino-acid chain; its full sequence is Glutathione-regulated potassium-efflux system protein KefB (601 aa).

The next 13 helical transmembrane spans lie at 4 to 24 (ADLL…VPLA), 29 to 49 (IGAV…GLGF), 55 to 75 (EILH…GLEL), 87 to 107 (IFGV…GLLM), 111 to 131 (FLWQ…TAMA), 152 to 172 (VLLF…LLAG), 177 to 197 (HFDW…LIGG), 207 to 227 (FIAA…LVLS), 230 to 250 (LFMD…GVLL), 262 to 282 (AIDP…GMSL), 284 to 304 (LGVL…LVVI), 324 to 344 (MQFA…FSTA), and 356 to 376 (ALLL…MKGI). Residues 400-519 (KPQVIVVGFG…AGVTQFSRET (120 aa)) enclose the RCK N-terminal domain.

It belongs to the monovalent cation:proton antiporter 2 (CPA2) transporter (TC 2.A.37) family. KefB subfamily. In terms of assembly, interacts with the regulatory subunit KefG.

It localises to the cell inner membrane. Pore-forming subunit of a potassium efflux system that confers protection against electrophiles. Catalyzes K(+)/H(+) antiport. The sequence is that of Glutathione-regulated potassium-efflux system protein KefB from Salmonella paratyphi B (strain ATCC BAA-1250 / SPB7).